Here is an 87-residue protein sequence, read N- to C-terminus: Small ribosomal subunit protein bS20 (87 aa).

The protein belongs to the bacterial ribosomal protein bS20 family.

Binds directly to 16S ribosomal RNA. The sequence is that of Small ribosomal subunit protein bS20 from Corynebacterium urealyticum (strain ATCC 43042 / DSM 7109).